The following is a 528-amino-acid chain: Protein MGF 505-7R (528 aa).

ANK repeat units lie at residues 54-83 (SIND…NLHY), 129-158 (GCDL…LLNV), 261-290 (SVKR…IPRG), 292-321 (IERL…YKVK), and 322-352 (NVKK…LLDA).

This sequence belongs to the asfivirus MGF 505 family. In terms of assembly, interacts with host STING1. Interacts with host JAK1; this interaction leads to JAK1 degradation. Interacts with host JAK2; this interaction leads to JAK2 degradation. Interacts with host RELA; this interaction inhibits NF-kappa-B promoter activity.

It is found in the host cytoplasm. Functionally, plays a role in virus cell tropism, and may be required for efficient virus replication in macrophages. Interferes with host NF-kappa-B promoter activity mediated by TLR8. Mechanistically, inhibits the phosphorylation and subsequent nuclear translocation of host NF-kappa-B RELA subunit downstream of TLR8. Promotes the expression of the autophagy-related protein host ULK1 to degrade host STING and inhibit the interferon response. Inhibits also JAK1- and JAK2-mediated signaling and thus negatively regulates the IFN-gamma signaling. The protein is Protein MGF 505-7R of African swine fever virus (strain Badajoz 1971 Vero-adapted) (Ba71V).